A 1894-amino-acid polypeptide reads, in one-letter code: 1,3-beta-glucan synthase component bgs2 (1894 aa).

Disordered regions lie at residues 1–53 (MSWH…DSNK) and 282–310 (GPKIKQAKKKQKRKSNKAETEGTNEPETS). Polar residues predominate over residues 32–51 (EFNNPGEESTYPQANSWNDS). The segment covering 286–296 (KQAKKKQKRKS) has biased composition (basic residues). The next 16 membrane-spanning stretches (helical) occupy residues 530-550 (VSLGGAVATLLMLLATIFEWI), 566-586 (FLILILFFILNVAPTVFVFGF), 600-620 (VAIVHFIFSVFTFIYFSLVPL), 655-675 (VSWGLWLLVFGAKFTESYFFL), 710-730 (ILLGIMYVTDLVLFFLDTYLW), 731-751 (YILVNTVFSVARSFFLGISIW), 1338-1358 (IFIMLSVQLFMVVLVNLGGMY), 1394-1414 (CIISIFIVFFISFVPLTVQEL), 1476-1498 (LLFSRFAGPSIYLGSRTLLMLLF), 1503-1525 (VWIPHLIYFWISTLAMCISPFIF), 1598-1618 (FTEIFIPLMLVPLTLVSYFFI), 1637-1657 (ILILAFLPIIVAAVVSMTFAG), 1673-1693 (FGAVLAALAHGITVFMFIIVF), 1697-1717 (WYLEAWCLAKTVLSMLCIIAI), 1778-1798 (DFFLCHLLLFLMLPVLLIPFI), and 1837-1857 (TMFFLLLIAFLALIIIPLVVA).

Belongs to the glycosyltransferase 48 family. In terms of assembly, component of the 1,3-beta-glucan synthase (GS) complex, composed of at least the alternate catalytic subunits bgs1, bgs2, bgs3, and bgs4, and a regulatory subunit chr4.

Its subcellular location is the prospore membrane. The enzyme catalyses [(1-&gt;3)-beta-D-glucosyl](n) + UDP-alpha-D-glucose = [(1-&gt;3)-beta-D-glucosyl](n+1) + UDP + H(+). Functionally, alternate catalytic subunit of the 1,3-beta-glucan synthase (GS) complex. Synthesizes 1,3-beta-glucan, a major structural component of the yeast cell wall. Has a role in ascospore development where it is required for the assembly of a functional spore wall. This is 1,3-beta-glucan synthase component bgs2 from Schizosaccharomyces pombe (strain 972 / ATCC 24843) (Fission yeast).